We begin with the raw amino-acid sequence, 281 residues long: Large ribosomal subunit protein uL2 (281 aa).

Residues 210–281 form a disordered region; the sequence is RTRYAGQRPH…RGRKRGPHTR (72 aa). Residues 254–281 are compositionally biased toward basic residues; it reads TVGKKTRSHKARSNKFIVRGRKRGPHTR.

The protein belongs to the universal ribosomal protein uL2 family. As to quaternary structure, part of the 50S ribosomal subunit. Forms a bridge to the 30S subunit in the 70S ribosome.

Its function is as follows. One of the primary rRNA binding proteins. Required for association of the 30S and 50S subunits to form the 70S ribosome, for tRNA binding and peptide bond formation. It has been suggested to have peptidyltransferase activity; this is somewhat controversial. Makes several contacts with the 16S rRNA in the 70S ribosome. This is Large ribosomal subunit protein uL2 from Limosilactobacillus reuteri subsp. reuteri (strain JCM 1112) (Lactobacillus reuteri).